A 157-amino-acid polypeptide reads, in one-letter code: Ribonuclease (157 aa).

Residues 1-34 (MMKMEGIALKKRLSWISVCLLVLVSAAGMLFSTA) form the signal peptide. A propeptide spanning residues 35–47 (AKTETSSHKAHTE) is cleaved from the precursor. E120 serves as the catalytic Proton acceptor. H149 serves as the catalytic Proton donor.

This sequence belongs to the ribonuclease N1/T1 family.

The protein resides in the secreted. Hydrolyzes phosphodiester bonds in RNA, poly- and oligoribonucleotides resulting in 3'-nucleoside monophosphates via 2',3'-cyclophosphate intermediates. The protein is Ribonuclease of Bacillus amyloliquefaciens (Bacillus velezensis).